The sequence spans 528 residues: Phosphoenolpyruvate carboxykinase (ATP) (528 aa).

Residues Arg-56, Tyr-192, and Lys-198 each contribute to the substrate site. ATP contacts are provided by residues Lys-198, His-217, and 233–241; that span reads GLSGTGKTT. Positions 198 and 217 each coordinate Mn(2+). Asp-254 lines the Mn(2+) pocket. ATP contacts are provided by Glu-282, Arg-319, and Thr-444. Arg-319 serves as a coordination point for substrate.

The protein belongs to the phosphoenolpyruvate carboxykinase (ATP) family. It depends on Mn(2+) as a cofactor.

The protein resides in the cytoplasm. It carries out the reaction oxaloacetate + ATP = phosphoenolpyruvate + ADP + CO2. Its pathway is carbohydrate biosynthesis; gluconeogenesis. Functionally, involved in the gluconeogenesis. Catalyzes the conversion of oxaloacetate (OAA) to phosphoenolpyruvate (PEP) through direct phosphoryl transfer between the nucleoside triphosphate and OAA. The sequence is that of Phosphoenolpyruvate carboxykinase (ATP) from Bacillus cereus (strain AH187).